Reading from the N-terminus, the 1290-residue chain is Period circadian protein homolog 1 (1290 aa).

The tract at residues 1 to 134 (MSGPLEGADG…SSEQSARART (134 aa)) is disordered. The interval 1–151 (MSGPLEGADG…LRELKLRLPP (151 aa)) is interaction with BTRC. A compositionally biased stretch (pro residues) spans 25-38 (VPSPGPPQHRPCPG). 2 stretches are compositionally biased toward low complexity: residues 48–57 (NSNGSSGNES) and 64–115 (GASQ…ASSE). The span at 116-132 (QDNPSTSGCSSEQSARA) shows a compositional bias: polar residues. Phosphothreonine; by CSNK1E is present on Thr-121. 2 positions are modified to phosphoserine; by CSNK1E: Ser-122 and Ser-126. The Nuclear export signal 1 motif lies at 138-147 (LMTALRELKL). 2 consecutive PAS domains span residues 208–275 (ITSE…PSRL) and 348–414 (YEAP…KILQ). Positions 422–465 (HSPIRFCARNGEYVTMDTSWAGFVHPWSRKVAFVLGRHKVRTAP) constitute a PAC domain. The short motif at 489-498 (LSEQIHRLLL) is the Nuclear export signal 2 element. Disordered stretches follow at residues 508-544 (GLCG…PAPV) and 646-698 (TTKR…KEPV). 2 stretches are compositionally biased toward low complexity: residues 517 to 533 (SPGP…SNGG) and 652 to 662 (ASSSSYTTSSA). The interval 596 to 815 (ELEAGSAPVQ…GLDSSSTAPS (220 aa)) is required for phosphorylation by CSNK1E. A phosphoserine mark is found at Ser-661, Ser-663, and Ser-704. Disordered stretches follow at residues 749–772 (GLAP…APDA), 805–874 (RGLD…PPAT), and 938–977 (ALQT…FNSR). Pro residues predominate over residues 751-769 (APGPAPSPAPSPTVAPDPA). Ser-815 is subject to Phosphoserine. Residues 827–843 (APPSRRHHCRSKAKRSR) carry the Nuclear localization signal motif. Residues 830–847 (SRRHHCRSKAKRSRHHQN) show a composition bias toward basic residues. Positions 860 to 874 (SPVPPSTPWPTPPAT) are enriched in pro residues. The segment covering 950–961 (ASHSPSPSLPAL) has biased composition (low complexity). Residues Ser-979 and Ser-980 each carry the phosphoserine modification. The Nuclear export signal 3 signature appears at 982-989 (LQLNLLQL). The segment at 996-1037 (EGAAVAGGPGSSAGPPPPSAEAAEPEARLAEVTESSNQDALS) is disordered. Residues 1043-1047 (LELLL) carry the LXXLL motif. The segment covering 1051-1062 (SRSGTGSAASGS) has biased composition (low complexity). Disordered regions lie at residues 1051-1098 (SRSG…SKYF) and 1207-1290 (SSTQ…NCTS). A compositionally biased stretch (gly residues) spans 1063–1077 (LGSGLGSGSGSGSHE). Low complexity predominate over residues 1078 to 1095 (GGSTSASITRSSQSSHTS). Residues 1149–1290 (SRDMTSVLKQ…ALPTAGNCTS (142 aa)) form a CRY binding domain region. Gly residues predominate over residues 1236 to 1248 (GEQGSSGGGSGEG).

Homodimer. Component of the circadian core oscillator, which includes the CRY proteins, CLOCK or NPAS2, BMAL1 or BMAL2, CSNK1D and/or CSNK1E, TIMELESS, and the PER proteins. Interacts directly with TIMELESS, PER2, PER3, CRY1 and CRY2. Interacts with BMAL1 and CLOCK. Interacts with GPRASP1. Interacts (phosphorylated) with BTRC and FBXW11; the interactions trigger proteasomal degradation. Interacts with NONO, WDR5 and SFPQ. Interacts with USP2. Interacts with HNF4A. Post-translationally, phosphorylated on serine residues by CSNK1D, CSNK1E and probably also by CSNK1G2. Phosphorylation by CSNK1D or CSNK1E promotes nuclear location of PER proteins as well as ubiquitination and subsequent degradation. May be dephosphorylated by PP1. In terms of processing, ubiquitinated; requires phosphorylation by CSNK1E and interaction with BTRC and FBXW11. Deubiquitinated by USP2. Widely expressed. Expressed in hair follicles (at protein level). Found in heart, brain, placenta, lung, liver, skeletal muscle, pancreas, kidney, spleen, thymus, prostate, testis, ovary and small intestine. Highest level in skeletal muscle.

It localises to the nucleus. Its subcellular location is the cytoplasm. Its function is as follows. Transcriptional repressor which forms a core component of the circadian clock. The circadian clock, an internal time-keeping system, regulates various physiological processes through the generation of approximately 24 hour circadian rhythms in gene expression, which are translated into rhythms in metabolism and behavior. It is derived from the Latin roots 'circa' (about) and 'diem' (day) and acts as an important regulator of a wide array of physiological functions including metabolism, sleep, body temperature, blood pressure, endocrine, immune, cardiovascular, and renal function. Consists of two major components: the central clock, residing in the suprachiasmatic nucleus (SCN) of the brain, and the peripheral clocks that are present in nearly every tissue and organ system. Both the central and peripheral clocks can be reset by environmental cues, also known as Zeitgebers (German for 'timegivers'). The predominant Zeitgeber for the central clock is light, which is sensed by retina and signals directly to the SCN. The central clock entrains the peripheral clocks through neuronal and hormonal signals, body temperature and feeding-related cues, aligning all clocks with the external light/dark cycle. Circadian rhythms allow an organism to achieve temporal homeostasis with its environment at the molecular level by regulating gene expression to create a peak of protein expression once every 24 hours to control when a particular physiological process is most active with respect to the solar day. Transcription and translation of core clock components (CLOCK, NPAS2, BMAL1, BMAL2, PER1, PER2, PER3, CRY1 and CRY2) plays a critical role in rhythm generation, whereas delays imposed by post-translational modifications (PTMs) are important for determining the period (tau) of the rhythms (tau refers to the period of a rhythm and is the length, in time, of one complete cycle). A diurnal rhythm is synchronized with the day/night cycle, while the ultradian and infradian rhythms have a period shorter and longer than 24 hours, respectively. Disruptions in the circadian rhythms contribute to the pathology of cardiovascular diseases, cancer, metabolic syndromes and aging. A transcription/translation feedback loop (TTFL) forms the core of the molecular circadian clock mechanism. Transcription factors, CLOCK or NPAS2 and BMAL1 or BMAL2, form the positive limb of the feedback loop, act in the form of a heterodimer and activate the transcription of core clock genes and clock-controlled genes (involved in key metabolic processes), harboring E-box elements (5'-CACGTG-3') within their promoters. The core clock genes: PER1/2/3 and CRY1/2 which are transcriptional repressors form the negative limb of the feedback loop and interact with the CLOCK|NPAS2-BMAL1|BMAL2 heterodimer inhibiting its activity and thereby negatively regulating their own expression. This heterodimer also activates nuclear receptors NR1D1/2 and RORA/B/G, which form a second feedback loop and which activate and repress BMAL1 transcription, respectively. Regulates circadian target genes expression at post-transcriptional levels, but may not be required for the repression at transcriptional level. Controls PER2 protein decay. Represses CRY2 preventing its repression on CLOCK/BMAL1 target genes such as FXYD5 and SCNN1A in kidney and PPARA in liver. Besides its involvement in the maintenance of the circadian clock, has an important function in the regulation of several processes. Participates in the repression of glucocorticoid receptor NR3C1/GR-induced transcriptional activity by reducing the association of NR3C1/GR to glucocorticoid response elements (GREs) by BMAL1:CLOCK. Plays a role in the modulation of the neuroinflammatory state via the regulation of inflammatory mediators release, such as CCL2 and IL6. In spinal astrocytes, negatively regulates the MAPK14/p38 and MAPK8/JNK MAPK cascades as well as the subsequent activation of NFkappaB. Coordinately regulates the expression of multiple genes that are involved in the regulation of renal sodium reabsorption. Can act as gene expression activator in a gene and tissue specific manner, in kidney enhances WNK1 and SLC12A3 expression in collaboration with CLOCK. Modulates hair follicle cycling. Represses the CLOCK-BMAL1 induced transcription of BHLHE40/DEC1. This is Period circadian protein homolog 1 (PER1) from Homo sapiens (Human).